We begin with the raw amino-acid sequence, 240 residues long: Glutamine transport ATP-binding protein GlnQ (240 aa).

An ABC transporter domain is found at isoleucine 2 to leucine 236. Glycine 34–serine 41 is a binding site for ATP.

Belongs to the ABC transporter superfamily. In terms of assembly, heterotetramer with 2 subunits of GlnQ and 2 subunits of GlnP.

It is found in the cell inner membrane. Its function is as follows. Part of the binding-protein-dependent transport system for glutamine. Probably responsible for energy coupling to the transport system. The chain is Glutamine transport ATP-binding protein GlnQ (glnQ) from Escherichia coli (strain K12).